The chain runs to 46 residues: Large ribosomal subunit protein bL34 (46 aa).

Positions 1 to 17 (MTKRTLRGSVRKKKRTS) are enriched in basic residues. The disordered stretch occupies residues 1 to 26 (MTKRTLRGSVRKKKRTSGFRARMETP).

The protein belongs to the bacterial ribosomal protein bL34 family.

This Pseudanabaena sp. (strain PCC 6903) protein is Large ribosomal subunit protein bL34 (rpmH).